The sequence spans 141 residues: Putative pre-16S rRNA nuclease (141 aa).

Belongs to the YqgF nuclease family.

Its subcellular location is the cytoplasm. Could be a nuclease involved in processing of the 5'-end of pre-16S rRNA. The chain is Putative pre-16S rRNA nuclease from Aliivibrio fischeri (strain ATCC 700601 / ES114) (Vibrio fischeri).